The primary structure comprises 274 residues: Enoyl-CoA isomerase/hydratase fer4 (274 aa).

Residues 77 to 81 and glycine 124 each bind substrate; that span reads AGADL. Positions 79 to 109 form a coiled coil; that stretch reads ADLKERREMSEAEVIEFLQDLRHMLEQVEKL.

This sequence belongs to the enoyl-CoA hydratase/isomerase family.

The enzyme catalyses a (3S)-3-hydroxyacyl-CoA = a (2E)-enoyl-CoA + H2O. It carries out the reaction a 4-saturated-(3S)-3-hydroxyacyl-CoA = a (3E)-enoyl-CoA + H2O. The protein operates within siderophore biosynthesis. Its function is as follows. Enoyl-CoA isomerase/hydratase; part of the gene cluster that mediates the biosynthesis of siderophore ferrichrome A which is contributing to organismal virulence. The first step of ferrichrome A biosynthesis is performed by the HMG-CoA synthase hcs1 which catalyzes the generation of HMG-CoA and CoA using acetoacetyl-CoA and acetyl-CoA as substrates. The enoyl-CoA isomerase/hydratase fer4 then catalyzes the conversion of hcs1-produced HMG-CoA to methylglutaconyl-CoA. The acyltransferase fer5 then fuses the fer4-generated methylglutaconyl-CoA with sid1-generated hydroxyornithine to yield methylglutaconyl hydroxyornithine. Methylglutaconyl hydroxyornithine is then available for use by the NRPS fer3 to generate ferrichrome A. In Mycosarcoma maydis (Corn smut fungus), this protein is Enoyl-CoA isomerase/hydratase fer4.